The chain runs to 163 residues: Phosphopantetheine adenylyltransferase (163 aa).

A substrate-binding site is contributed by S8. Residues 8–9 (SF) and H16 each bind ATP. Positions 40, 72, and 86 each coordinate substrate. ATP contacts are provided by residues 87–89 (GLR), E97, and 122–128 (HSFLSSS).

This sequence belongs to the bacterial CoaD family. Homohexamer. Requires Mg(2+) as cofactor.

The protein resides in the cytoplasm. It carries out the reaction (R)-4'-phosphopantetheine + ATP + H(+) = 3'-dephospho-CoA + diphosphate. It functions in the pathway cofactor biosynthesis; coenzyme A biosynthesis; CoA from (R)-pantothenate: step 4/5. Functionally, reversibly transfers an adenylyl group from ATP to 4'-phosphopantetheine, yielding dephospho-CoA (dPCoA) and pyrophosphate. This Parasynechococcus marenigrum (strain WH8102) protein is Phosphopantetheine adenylyltransferase.